Reading from the N-terminus, the 313-residue chain is Acetaldehyde dehydrogenase 3 (313 aa).

NAD(+) is bound at residue 13 to 16 (SGNI). The Acyl-thioester intermediate role is filled by cysteine 133. Residues 164 to 172 (SAGPGTRAN) and asparagine 291 each bind NAD(+).

It belongs to the acetaldehyde dehydrogenase family.

It carries out the reaction acetaldehyde + NAD(+) + CoA = acetyl-CoA + NADH + H(+). The polypeptide is Acetaldehyde dehydrogenase 3 (Paraburkholderia xenovorans (strain LB400)).